Reading from the N-terminus, the 549-residue chain is Cation/acetate symporter ActP (549 aa).

13 helical membrane-spanning segments follow: residues 33–53 (WQAIIMFLIFVVFTLGITYWA), 77–97 (LAIAGDYMSAASFLGISALVF), 103–123 (GLIYSLGFLVGWPIILFLIAE), 148–168 (ILSACGSLVVVALYLIAQMVG), 183–203 (IAVVLVGVLMMMYVLFGGMLA), 206–226 (WVQIIKAVLLLFGASFMAFMV), 262–282 (ISALSLGLGLMFGTAGLPHIL), 303–323 (GFMGYFYILTFIIGFGAIMLV), 355–375 (LFLGFISAVAFATILAVVAGL), 404–424 (VSKITVLILGVIAIILGVLFE), 428–448 (IAFMVGLAFAIAASCNFPIIL), 464–484 (GGWLGLITAVVLMILGPTIWV), and 493–513 (IFPYEYPALFSISVAFLGIWF).

Belongs to the sodium:solute symporter (SSF) (TC 2.A.21) family.

The protein resides in the cell inner membrane. Functionally, transports acetate. The protein is Cation/acetate symporter ActP of Escherichia coli O17:K52:H18 (strain UMN026 / ExPEC).